The sequence spans 97 residues: HssA/B-like protein 32 (97 aa).

Disordered regions lie at residues Met1 to Ser23 and Ala62 to Ser97. The span at Ala62–Gly74 shows a compositional bias: gly residues. Over residues Ser75 to Gly88 the composition is skewed to basic residues.

It belongs to the hssA/B family.

This Dictyostelium discoideum (Social amoeba) protein is HssA/B-like protein 32 (hssl32).